The chain runs to 291 residues: Elongation factor Ts (291 aa).

The involved in Mg(2+) ion dislocation from EF-Tu stretch occupies residues 79-82 (TDFV).

This sequence belongs to the EF-Ts family.

It is found in the cytoplasm. In terms of biological role, associates with the EF-Tu.GDP complex and induces the exchange of GDP to GTP. It remains bound to the aminoacyl-tRNA.EF-Tu.GTP complex up to the GTP hydrolysis stage on the ribosome. The polypeptide is Elongation factor Ts (Jannaschia sp. (strain CCS1)).